The following is a 274-amino-acid chain: Large ribosomal subunit protein uL2 (274 aa).

The disordered stretch occupies residues 221 to 274 (RGTAMNPVDHPHGGGEGKNFGKHPVTPWGVQTKGKKTRSNKRTDKFIVRRRSKK).

This sequence belongs to the universal ribosomal protein uL2 family. Part of the 50S ribosomal subunit. Forms a bridge to the 30S subunit in the 70S ribosome.

In terms of biological role, one of the primary rRNA binding proteins. Required for association of the 30S and 50S subunits to form the 70S ribosome, for tRNA binding and peptide bond formation. It has been suggested to have peptidyltransferase activity; this is somewhat controversial. Makes several contacts with the 16S rRNA in the 70S ribosome. This is Large ribosomal subunit protein uL2 from Serratia proteamaculans (strain 568).